The following is a 637-amino-acid chain: Delta(14)-sterol reductase LBR (637 aa).

Residues 1–62 (MPNRKYADGE…DIRLQSSFKQ (62 aa)) enclose the Tudor domain. Residues 1–205 (MPNRKYADGE…KTKELEFGGR (205 aa)) are Nuclear-facing. Residues 57 to 73 (QSSFKQRKSQSSSSSPS) show a composition bias toward low complexity. A disordered region spans residues 57–151 (QSSFKQRKSQ…SKLLEQQKLK (95 aa)). The segment covering 74-97 (RRSRSRSRSRSPGRPAKGRRRSSS) has biased composition (basic residues). Phosphoserine; by PKA occurs at positions 95 and 96. 2 stretches are compositionally biased toward basic and acidic residues: residues 98–110 (HSRE…KKII) and 124–151 (NTRR…QKLK). 8 helical membrane-spanning segments follow: residues 206–226 (FGTF…VLMC), 250–270 (VFGV…LPIG), 288–309 (INGF…YFQF), 317–338 (HFVQ…YLYI), 378–399 (YFCE…MLLA), 403–425 (IHNQ…LYVV), 466–486 (FYLV…ITIL), and 554–574 (PCGF…CLLV).

It belongs to the ERG4/ERG24 family. In terms of assembly, interacts with DNA. Interaction with DNA is sequence independent with higher affinity for supercoiled and relaxed circular DNA than linear DNA.

It is found in the nucleus inner membrane. The protein resides in the nucleus. It localises to the cytoplasm. Its subcellular location is the endoplasmic reticulum membrane. The enzyme catalyses 5alpha-cholest-8,14-dien-3beta-ol + NADPH + H(+) = 5alpha-cholest-8-en-3beta-ol + NADP(+). The catalysed reaction is 4,4-dimethyl-5alpha-cholesta-8,24-dien-3beta-ol + NADP(+) = 4,4-dimethyl-5alpha-cholesta-8,14,24-trien-3beta-ol + NADPH + H(+). It catalyses the reaction 4,4-dimethyl-8,14-cholestadien-3beta-ol + NADPH + H(+) = 4,4-dimethyl-5alpha-cholest-8-en-3beta-ol + NADP(+). It participates in steroid biosynthesis; cholesterol biosynthesis. In terms of biological role, catalyzes the reduction of the C14-unsaturated bond of lanosterol, as part of the metabolic pathway leading to cholesterol biosynthesis. Anchors the lamina and the heterochromatin to the inner nuclear membrane. The protein is Delta(14)-sterol reductase LBR (LBR) of Gallus gallus (Chicken).